Here is a 135-residue protein sequence, read N- to C-terminus: Large ribosomal subunit protein bL19 (135 aa).

This sequence belongs to the bacterial ribosomal protein bL19 family.

This protein is located at the 30S-50S ribosomal subunit interface and may play a role in the structure and function of the aminoacyl-tRNA binding site. This chain is Large ribosomal subunit protein bL19, found in Xanthomonas euvesicatoria pv. vesicatoria (strain 85-10) (Xanthomonas campestris pv. vesicatoria).